The sequence spans 268 residues: HTH-type transcriptional activator RhaS (268 aa).

The region spanning 171 to 268 (RQMIRWLENN…YSIAPRELRI (98 aa)) is the HTH araC/xylS-type domain. DNA-binding regions (H-T-H motif) lie at residues 188-209 (EELAEKFALPIRTLHRYIKSQT) and 236-259 (IINIAYDCGFNDSSYFSTCFKNEY).

Binds DNA as a dimer.

It is found in the cytoplasm. In terms of biological role, activates expression of the rhaBAD and rhaT operons. This is HTH-type transcriptional activator RhaS from Mannheimia succiniciproducens (strain KCTC 0769BP / MBEL55E).